Reading from the N-terminus, the 602-residue chain is Leishmanolysin (602 aa).

The signal sequence occupies residues 1 to 39 (MSVDSSSTHRRRCVAARLVRLAAAGAAVTVAVGTAAAWA). Positions 40-100 (HAGALQHRCV…DPRPGSARSV (61 aa)) are cleaved as a propeptide — activation peptide. Intrachain disulfides connect cysteine 125-cysteine 142 and cysteine 191-cysteine 230. Histidine 264 provides a ligand contact to Zn(2+). Residue glutamate 265 is part of the active site. Histidine 268 provides a ligand contact to Zn(2+). Residue asparagine 300 is glycosylated (N-linked (GlcNAc...) asparagine). Intrachain disulfides connect cysteine 314/cysteine 386, cysteine 393/cysteine 455, cysteine 406/cysteine 425, cysteine 415/cysteine 489, cysteine 466/cysteine 510, cysteine 515/cysteine 565, and cysteine 535/cysteine 558. Residue histidine 334 participates in Zn(2+) binding. Asparagine 407 carries an N-linked (GlcNAc...) asparagine glycan. A glycan (N-linked (GlcNAc...) asparagine) is linked at asparagine 534. Residue asparagine 577 is the site of GPI-anchor amidated asparagine attachment. Positions 578 to 602 (TAAGRRGPRAAATALLVAALLAVAL) are cleaved as a propeptide — removed in mature form.

The protein belongs to the peptidase M8 family. It depends on Zn(2+) as a cofactor. In terms of processing, the phosphatidylinositol moiety of the GPI-anchor contains a fully saturated, unbranched 1-O-alkyl chain (mainly C24:0) and a mixture of fully saturated unbranched 2-O-acyl chains (C12:0, C14:0, C16:0, and C18:0).

The protein resides in the cell membrane. The enzyme catalyses Preference for hydrophobic residues at P1 and P1' and basic residues at P2' and P3'. A model nonapeptide is cleaved at -Ala-Tyr-|-Leu-Lys-Lys-.. Functionally, has an integral role during the infection of macrophages in the mammalian host. The sequence is that of Leishmanolysin (gp63) from Leishmania major.